The sequence spans 362 residues: Erythritol/L-threitol dehydrogenase (362 aa).

Zn(2+)-binding residues include C45, H76, E77, C109, C112, C115, and C123. NAD(+) contacts are provided by I195 and D215.

The protein belongs to the zinc-containing alcohol dehydrogenase family. It depends on Zn(2+) as a cofactor.

It catalyses the reaction erythritol + NAD(+) = D-erythrulose + NADH + H(+). The catalysed reaction is L-threitol + NAD(+) = L-erythrulose + NADH + H(+). Its pathway is carbohydrate metabolism; erythritol degradation. It functions in the pathway carbohydrate metabolism; L-threitol degradation. In terms of biological role, catalyzes the NAD-dependent reversible oxidation of erythritol and L-threitol. Involved in the degradation pathways of erythritol and L-threitol, that allow M.smegmatis to grow on these compounds as the sole carbon source. This chain is Erythritol/L-threitol dehydrogenase, found in Mycolicibacterium smegmatis (strain ATCC 700084 / mc(2)155) (Mycobacterium smegmatis).